Here is a 247-residue protein sequence, read N- to C-terminus: ATP synthase subunit a, chloroplastic (247 aa).

Helical transmembrane passes span 38 to 58, 95 to 115, 133 to 153, 199 to 219, and 220 to 240; these read QVLI…IIAV, VPFI…GALL, DINT…YAGL, LVVV…VMFL, and GLFT…AYIG.

It belongs to the ATPase A chain family. As to quaternary structure, F-type ATPases have 2 components, CF(1) - the catalytic core - and CF(0) - the membrane proton channel. CF(1) has five subunits: alpha(3), beta(3), gamma(1), delta(1), epsilon(1). CF(0) has four main subunits: a, b, b' and c.

The protein resides in the plastid. It localises to the chloroplast thylakoid membrane. Its function is as follows. Key component of the proton channel; it plays a direct role in the translocation of protons across the membrane. In Phalaenopsis aphrodite subsp. formosana (Moth orchid), this protein is ATP synthase subunit a, chloroplastic.